A 230-amino-acid chain; its full sequence is Antiholin-like protein LrgB (230 aa).

8 helical membrane-spanning segments follow: residues 5–25 (MTPY…TLLF), 30–50 (GFFL…FLKV), 61–81 (GGKM…IPLY), 92–112 (WQIL…VYIV), 126–146 (MLPQ…IGGI), 149–169 (ITSF…ALFL), 177–197 (PIAK…AVGI), and 209–229 (IAVT…MPFI).

It belongs to the CidB/LrgB family. LrgB subfamily.

The protein localises to the cell membrane. In terms of biological role, inhibits the expression or activity of extracellular murein hydrolases by interacting, possibly with LrgA, with the holin-like protein CidA. The LrgAB and CidA proteins may affect the proton motive force of the membrane. May be involved in programmed cell death (PCD), possibly triggering PCD in response to antibiotics and environmental stresses. In Bacillus mycoides (strain KBAB4) (Bacillus weihenstephanensis), this protein is Antiholin-like protein LrgB.